Here is a 1055-residue protein sequence, read N- to C-terminus: MYPIIMEWNGGGSFNGRPLSWSKLERILSGKKVESLRPVLHEPDAQAPSSAMQGEASVPFAELHATSSYNFLTGASDPSDVVVQAKKLGLVALSVMDRDGFYGAVRFAEAAAEAGMHTVYGAELSLQEGVLTVLCKNPEGYKKLSHLISDAKMATGEKGEVRYPPLPMVAEHAAGDWVVLAGFQWLDKIDYVIDCFKPENIVLEFGSTMTPEDADRNEYLRRTQAKFQLRGILSTNPESAARGSVRLAGAKQALARKMPLADAESELHPMGTTWMRSGDTLLKAHPDYADLIATTVELAAECAFTLDLVAPNLPKWDTPGEHTEMSWLAHLVSTRIDTRYVGRSADIKARAATQIDYELGVIEKLGFPGYFLVVNDLVEFCRDSNILCQGRGSAANSAVCFVLGITNAEPISAGLLFERFLSPDRDGPPDIDIDIESGRREEVIQYVYEKYGRDNAAQVANVITYRTKGAMRDAARALGYPQGAADAWAKGTSEPPDDVLELAAQFKGQPRHLGIHSGGMVICDRPIADVVPVEWARMDNRSVVQWDKDDCATAGLVKFDLLGLGMLEAIHHMLDLVAEHRGKKINLWELDLAEPEVYDMLCKADAVGVFQVESRAQLSTLPRLKPRTFFDLVVEVALIRPGPIQGGSVHPYLRRRAGEEAITYDHPVLEKSLGKTLGIPLFQEQLMQVAVDAAGFSGGEADSLRRAMGSKRSPERMAALRSRFFQGLKDTNGIVGETAEKLWNKIVAFAAYGFPESHSQSFASLVYFSAWFKYHYPAEFCVGLLRAQPMGFYSPQSLISDARRHGVSILPITVNDSGVEADAPNGAIRLGLNLVKGLGHDAAQRIEDNAPFDSIPDLSRRADLNVAQVEALARAGAVDCLGVGRRQALWQAGVAATEKPGMLPGLSVIEAPALPGMSAFELMATNISATGVTADYQPMALIRERMEELGIVPADRLLEVEDGTRLRIAGIVTHRQRPQTASGLTFLGMEDETGLMNVMVSVGLWQRQRVLARNAKALIIRGIVQNAQGVATVVADRLEPLDMGEFLSRGSRDFR.

This sequence belongs to the DNA polymerase type-C family. DnaE2 subfamily.

It localises to the cytoplasm. It carries out the reaction DNA(n) + a 2'-deoxyribonucleoside 5'-triphosphate = DNA(n+1) + diphosphate. In terms of biological role, DNA polymerase involved in damage-induced mutagenesis and translesion synthesis (TLS). It is not the major replicative DNA polymerase. The protein is Error-prone DNA polymerase of Corynebacterium glutamicum (strain ATCC 13032 / DSM 20300 / JCM 1318 / BCRC 11384 / CCUG 27702 / LMG 3730 / NBRC 12168 / NCIMB 10025 / NRRL B-2784 / 534).